The following is a 1095-amino-acid chain: DNA-directed RNA polymerase subunit beta (1095 aa).

Positions 1069–1095 (DLMQDVNPRRSTPSRPTYESLGKEYEE) are disordered.

It belongs to the RNA polymerase beta chain family. As to quaternary structure, in cyanobacteria the RNAP catalytic core is composed of 2 alpha, 1 beta, 1 beta', 1 gamma and 1 omega subunit. When a sigma factor is associated with the core the holoenzyme is formed, which can initiate transcription.

The catalysed reaction is RNA(n) + a ribonucleoside 5'-triphosphate = RNA(n+1) + diphosphate. DNA-dependent RNA polymerase catalyzes the transcription of DNA into RNA using the four ribonucleoside triphosphates as substrates. This is DNA-directed RNA polymerase subunit beta from Prochlorococcus marinus (strain NATL2A).